The following is a 399-amino-acid chain: Tryptophan synthase beta chain (399 aa).

Position 92 is an N6-(pyridoxal phosphate)lysine (lysine 92).

It belongs to the TrpB family. As to quaternary structure, tetramer of two alpha and two beta chains. It depends on pyridoxal 5'-phosphate as a cofactor.

It catalyses the reaction (1S,2R)-1-C-(indol-3-yl)glycerol 3-phosphate + L-serine = D-glyceraldehyde 3-phosphate + L-tryptophan + H2O. The protein operates within amino-acid biosynthesis; L-tryptophan biosynthesis; L-tryptophan from chorismate: step 5/5. Functionally, the beta subunit is responsible for the synthesis of L-tryptophan from indole and L-serine. This Bordetella pertussis (strain Tohama I / ATCC BAA-589 / NCTC 13251) protein is Tryptophan synthase beta chain.